Reading from the N-terminus, the 187-residue chain is Translation machinery-associated protein 22 (187 aa).

Residues 94–165 (VTIKRIERNK…EIEEFILEKY (72 aa)) enclose the SUI1 domain.

It belongs to the DENR family. Interacts with the 40S ribosomal subunit.

Its subcellular location is the cytoplasm. The sequence is that of Translation machinery-associated protein 22 (tma-22) from Neurospora crassa (strain ATCC 24698 / 74-OR23-1A / CBS 708.71 / DSM 1257 / FGSC 987).